The sequence spans 20 residues: Equinatoxin-1'' (20 aa).

The interval 3-12 (AVAGAVIEGA) is plays an important role in the hemolytic activity. The N-terminal region stretch occupies residues 11–20 (GATLTFNVLQ).

The protein belongs to the actinoporin family. Sea anemone subfamily. As to quaternary structure, octamer or nonamer in membranes. Monomer in the soluble state.

It localises to the secreted. The protein localises to the nematocyst. Its subcellular location is the target cell membrane. Functionally, pore-forming protein that forms cations-selective hydrophilic pores of around 1 nm and causes cardiac stimulation and cytolysis. Pore formation is a multi-step process that involves specific recognition of membrane sphingomyelin (but neither cholesterol nor phosphatidylcholine) using aromatic rich region and adjacent phosphocholine (POC) binding site, firm binding to the membrane (mainly driven by hydrophobic interactions) accompanied by the transfer of the N-terminal region to the lipid-water interface and finally pore formation after oligomerization of monomers. Cytolytic effects include red blood cells hemolysis, platelet aggregation and lysis, cytotoxic and cytostatic effects on fibroblasts. Lethality in mammals has been ascribed to severe vasospasm of coronary vessels, cardiac arrhythmia, and inotropic effects. This is Equinatoxin-1'' from Actinia equina (Beadlet anemone).